Here is a 120-residue protein sequence, read N- to C-terminus: NAD(P)H-quinone oxidoreductase subunit 3, chloroplastic (120 aa).

The next 3 helical transmembrane spans lie at 9-29 (IFWA…LISG), 64-84 (MFAL…PWAM), and 88-108 (VLGV…ILGL).

It belongs to the complex I subunit 3 family. In terms of assembly, NDH is composed of at least 16 different subunits, 5 of which are encoded in the nucleus.

It is found in the plastid. The protein resides in the chloroplast thylakoid membrane. The catalysed reaction is a plastoquinone + NADH + (n+1) H(+)(in) = a plastoquinol + NAD(+) + n H(+)(out). It catalyses the reaction a plastoquinone + NADPH + (n+1) H(+)(in) = a plastoquinol + NADP(+) + n H(+)(out). NDH shuttles electrons from NAD(P)H:plastoquinone, via FMN and iron-sulfur (Fe-S) centers, to quinones in the photosynthetic chain and possibly in a chloroplast respiratory chain. The immediate electron acceptor for the enzyme in this species is believed to be plastoquinone. Couples the redox reaction to proton translocation, and thus conserves the redox energy in a proton gradient. The polypeptide is NAD(P)H-quinone oxidoreductase subunit 3, chloroplastic (Olimarabidopsis pumila (Dwarf rocket)).